Consider the following 886-residue polypeptide: Alanine--tRNA ligase (886 aa).

Residues H564, H568, C676, and H680 each contribute to the Zn(2+) site.

It belongs to the class-II aminoacyl-tRNA synthetase family. Zn(2+) is required as a cofactor.

The protein resides in the cytoplasm. It catalyses the reaction tRNA(Ala) + L-alanine + ATP = L-alanyl-tRNA(Ala) + AMP + diphosphate. Catalyzes the attachment of alanine to tRNA(Ala) in a two-step reaction: alanine is first activated by ATP to form Ala-AMP and then transferred to the acceptor end of tRNA(Ala). Also edits incorrectly charged Ser-tRNA(Ala) and Gly-tRNA(Ala) via its editing domain. The chain is Alanine--tRNA ligase from Bartonella bacilliformis.